We begin with the raw amino-acid sequence, 214 residues long: Putative AgrB-like protein 2 (214 aa).

Transmembrane regions (helical) follow at residues isoleucine 41–leucine 61, threonine 83–alanine 103, leucine 109–alanine 129, isoleucine 154–tryptophan 174, and proline 179–glycine 199.

This sequence belongs to the AgrB family.

The protein resides in the cell membrane. Functionally, may be involved in the proteolytic processing of a quorum sensing system signal molecule precursor. The chain is Putative AgrB-like protein 2 from Clostridium perfringens (strain 13 / Type A).